The primary structure comprises 109 residues: Staphostatin B (109 aa).

A binds to staphopain B region spans residues 97 to 101 (IGTSR).

It belongs to the protease inhibitor I57 (SspC) family. As to quaternary structure, forms a stable non-covalent complex with prematurely activated/folded SspB.

The protein localises to the cytoplasm. Functionally, specifically inhibits the cysteine protease staphopain B (SspB) by blocking the active site of the enzyme. Probably required to protect cytoplasmic proteins from being degraded by prematurely activated/folded prostaphopain B. Also involved in growth capacity, viability and bacterial morphology. This chain is Staphostatin B (sspC), found in Staphylococcus aureus (strain Mu50 / ATCC 700699).